A 382-amino-acid chain; its full sequence is (R,R)-butanediol dehydrogenase (382 aa).

Cys39 lines the Zn(2+) pocket. Ser63 bears the Phosphoserine mark. Residues His73, Cys103, Cys120, Cys123, Cys131, and Glu173 each contribute to the Zn(2+) site.

It belongs to the zinc-containing alcohol dehydrogenase family. As to quaternary structure, homodimer. Zn(2+) serves as cofactor.

It localises to the cytoplasm. The catalysed reaction is (R,R)-butane-2,3-diol + NAD(+) = (R)-acetoin + NADH + H(+). NAD-dependent (R,R)-butanediol dehydrogenase which catalyzes oxidation of (R,R)-butane-2,3-diol to (3R)-acetoin, of meso-butanediol to (3S)-acetoin, and reduction of acetoin. Allows the use of 2,3-butanediol as an aerobic carbon source. The sequence is that of (R,R)-butanediol dehydrogenase (BDH1) from Saccharomyces cerevisiae (strain ATCC 204508 / S288c) (Baker's yeast).